We begin with the raw amino-acid sequence, 318 residues long: GTP 3',8-cyclase (318 aa).

The Radical SAM core domain maps to 4–218; it reads KHGRNIDYLR…MSRSDLIPIE (215 aa). Arg13 contacts GTP. The [4Fe-4S] cluster site is built by Cys20 and Cys24. Tyr26 is an S-adenosyl-L-methionine binding site. Cys27 serves as a coordination point for [4Fe-4S] cluster. Arg62 serves as a coordination point for GTP. Gly66 serves as a coordination point for S-adenosyl-L-methionine. Thr93 serves as a coordination point for GTP. Ser117 provides a ligand contact to S-adenosyl-L-methionine. A GTP-binding site is contributed by Lys154. Met188 is an S-adenosyl-L-methionine binding site. [4Fe-4S] cluster is bound by residues Cys248 and Cys251. 253–255 provides a ligand contact to GTP; the sequence is KIR. A [4Fe-4S] cluster-binding site is contributed by Cys265.

This sequence belongs to the radical SAM superfamily. MoaA family. As to quaternary structure, monomer and homodimer. Requires [4Fe-4S] cluster as cofactor.

It catalyses the reaction GTP + AH2 + S-adenosyl-L-methionine = (8S)-3',8-cyclo-7,8-dihydroguanosine 5'-triphosphate + 5'-deoxyadenosine + L-methionine + A + H(+). The protein operates within cofactor biosynthesis; molybdopterin biosynthesis. Functionally, catalyzes the cyclization of GTP to (8S)-3',8-cyclo-7,8-dihydroguanosine 5'-triphosphate. The polypeptide is GTP 3',8-cyclase (Clostridium acetobutylicum (strain ATCC 824 / DSM 792 / JCM 1419 / IAM 19013 / LMG 5710 / NBRC 13948 / NRRL B-527 / VKM B-1787 / 2291 / W)).